A 261-amino-acid chain; its full sequence is MVESKFTIGDRTFTSRLIMGTGGAANLAILEEALIASGTELTTVAIRRVDTDGGSGLLKLLSRLDIMPLPNTAGCRSAAEAVLTAQLAREALNTNWIKLEVIADERTLLPDGLELVRAAEQLVDAGFVVLPYTNDDPALAHRLEGTGCAAVMPLGSPIGTGLGINNPHNIEIIVAQARVPVVLDAGIGTTSDAALAMELGCDAVLLASAVTRAVDPPTMAAAMASAVTAGYLARRAGRIPKRFWAQASSPELMRTGEELGN.

Lys98 acts as the Schiff-base intermediate with DXP in catalysis. 1-deoxy-D-xylulose 5-phosphate is bound by residues Gly159, 185 to 186 (AG), and 207 to 208 (AS).

This sequence belongs to the ThiG family. In terms of assembly, homotetramer. Forms heterodimers with either ThiH or ThiS.

The protein resides in the cytoplasm. The catalysed reaction is [ThiS sulfur-carrier protein]-C-terminal-Gly-aminoethanethioate + 2-iminoacetate + 1-deoxy-D-xylulose 5-phosphate = [ThiS sulfur-carrier protein]-C-terminal Gly-Gly + 2-[(2R,5Z)-2-carboxy-4-methylthiazol-5(2H)-ylidene]ethyl phosphate + 2 H2O + H(+). It participates in cofactor biosynthesis; thiamine diphosphate biosynthesis. Functionally, catalyzes the rearrangement of 1-deoxy-D-xylulose 5-phosphate (DXP) to produce the thiazole phosphate moiety of thiamine. Sulfur is provided by the thiocarboxylate moiety of the carrier protein ThiS. In vitro, sulfur can be provided by H(2)S. The polypeptide is Thiazole synthase (Mycobacterium leprae (strain Br4923)).